A 62-amino-acid polypeptide reads, in one-letter code: Coiled-coil domain-containing protein YLR146W-A (62 aa).

Positions 14 to 49 (EHARMLQNEIQQLFAQLRDTNSQIRCDLNEFEQIKE) form a coiled coil.

The protein is Coiled-coil domain-containing protein YLR146W-A of Saccharomyces cerevisiae (strain ATCC 204508 / S288c) (Baker's yeast).